The sequence spans 362 residues: 3-dehydroquinate synthase (362 aa).

Residues 71-76, 105-109, 129-130, Lys-142, Lys-151, and 169-172 each bind NAD(+); these read DGEQYK, GVVGD, TT, and CLKT. The Zn(2+) site is built by Glu-184, His-247, and His-264.

The protein belongs to the sugar phosphate cyclases superfamily. Dehydroquinate synthase family. Co(2+) serves as cofactor. Zn(2+) is required as a cofactor. It depends on NAD(+) as a cofactor.

The protein localises to the cytoplasm. The catalysed reaction is 7-phospho-2-dehydro-3-deoxy-D-arabino-heptonate = 3-dehydroquinate + phosphate. Its pathway is metabolic intermediate biosynthesis; chorismate biosynthesis; chorismate from D-erythrose 4-phosphate and phosphoenolpyruvate: step 2/7. In terms of biological role, catalyzes the conversion of 3-deoxy-D-arabino-heptulosonate 7-phosphate (DAHP) to dehydroquinate (DHQ). In Escherichia coli (strain K12 / MC4100 / BW2952), this protein is 3-dehydroquinate synthase.